Consider the following 136-residue polypeptide: Large ribosomal subunit protein bL17 (136 aa).

This sequence belongs to the bacterial ribosomal protein bL17 family. In terms of assembly, part of the 50S ribosomal subunit. Contacts protein L32.

In Methylobacterium radiotolerans (strain ATCC 27329 / DSM 1819 / JCM 2831 / NBRC 15690 / NCIMB 10815 / 0-1), this protein is Large ribosomal subunit protein bL17.